The sequence spans 300 residues: uncharacterized protein (300 aa).

The active-site Charge relay system is S49. Y137 functions as the Proton donor in the catalytic mechanism. The active-site Schiff-base intermediate with substrate is the K165.

The protein belongs to the DapA family. Homotetramer.

It localises to the cytoplasm. Its function is as follows. Upon expression in E.coli complements a dapA deletion mutation, but this may not be its physiological function. This is an uncharacterized protein from Rhizobium meliloti (Ensifer meliloti).